A 654-amino-acid polypeptide reads, in one-letter code: Acetyl-coenzyme A synthetase (654 aa).

CoA contacts are provided by residues 190–193 and Thr-313; that span reads RGGK. ATP contacts are provided by residues 389–391, 413–418, Asp-504, and Arg-519; these read GEP and DTWWQT. Ser-527 lines the CoA pocket. ATP is bound at residue Arg-530. 2 residues coordinate Mg(2+): Val-541 and Val-546. Lys-613 is modified (N6-acetyllysine).

This sequence belongs to the ATP-dependent AMP-binding enzyme family. Requires Mg(2+) as cofactor. In terms of processing, acetylated. Deacetylation by the SIR2-homolog deacetylase activates the enzyme.

It catalyses the reaction acetate + ATP + CoA = acetyl-CoA + AMP + diphosphate. Its function is as follows. Catalyzes the conversion of acetate into acetyl-CoA (AcCoA), an essential intermediate at the junction of anabolic and catabolic pathways. AcsA undergoes a two-step reaction. In the first half reaction, AcsA combines acetate with ATP to form acetyl-adenylate (AcAMP) intermediate. In the second half reaction, it can then transfer the acetyl group from AcAMP to the sulfhydryl group of CoA, forming the product AcCoA. This Leptospira borgpetersenii serovar Hardjo-bovis (strain L550) protein is Acetyl-coenzyme A synthetase.